The following is a 352-amino-acid chain: Protein-glutamate methylesterase/protein-glutamine glutaminase 1 (352 aa).

The Response regulatory domain maps to 5–122 (KVLVVDDSAF…SLDVLSVKEE (118 aa)). Aspartate 56 bears the 4-aspartylphosphate mark. The CheB-type methylesterase domain maps to 155-352 (PDQDRKLNKL…EITEEVLSML (198 aa)). Active-site residues include serine 170, histidine 197, and aspartate 297.

It belongs to the CheB family. In terms of processing, phosphorylated by CheA. Phosphorylation of the N-terminal regulatory domain activates the methylesterase activity.

The protein localises to the cytoplasm. It carries out the reaction [protein]-L-glutamate 5-O-methyl ester + H2O = L-glutamyl-[protein] + methanol + H(+). The catalysed reaction is L-glutaminyl-[protein] + H2O = L-glutamyl-[protein] + NH4(+). In terms of biological role, involved in chemotaxis. Part of a chemotaxis signal transduction system that modulates chemotaxis in response to various stimuli. Catalyzes the demethylation of specific methylglutamate residues introduced into the chemoreceptors (methyl-accepting chemotaxis proteins or MCP) by CheR. Also mediates the irreversible deamidation of specific glutamine residues to glutamic acid. The sequence is that of Protein-glutamate methylesterase/protein-glutamine glutaminase 1 from Syntrophomonas wolfei subsp. wolfei (strain DSM 2245B / Goettingen).